A 553-amino-acid chain; its full sequence is Solute carrier family 22 member 4 (553 aa).

The Cytoplasmic segment spans residues M1–L20. Residues I21–F41 form a helical membrane-spanning segment. Topologically, residues L42 to T142 are extracellular. N-linked (GlcNAc...) asparagine glycans are attached at residues N57, N64, and N91. Residues P143 to L163 form a helical membrane-spanning segment. The Cytoplasmic portion of the chain corresponds to S164–K171. The chain crosses the membrane as a helical span at residues V172–N192. Over W193 to T197 the chain is Extracellular. A helical transmembrane segment spans residues V198–G218. Residue G218–S225 coordinates ATP. Residues T219–T232 lie on the Cytoplasmic side of the membrane. The chain crosses the membrane as a helical span at residues L233 to I253. Residues R254–R257 lie on the Extracellular side of the membrane. A helical transmembrane segment spans residues M258 to P278. At E279–N339 the chain is on the cytoplasmic side. Residues I340 to A360 traverse the membrane as a helical segment. At L361–Y373 the chain is on the extracellular side. Residues L374–L394 form a helical membrane-spanning segment. Residues R395–R400 lie on the Cytoplasmic side of the membrane. Residues Y401 to P421 traverse the membrane as a helical segment. Topologically, residues E422 to S428 are extracellular. Residues I429–F449 traverse the membrane as a helical segment. Over T450–A462 the chain is Cytoplasmic. A helical membrane pass occupies residues V463–L483. Over G484–R488 the chain is Extracellular. Residues L489–F509 form a helical membrane-spanning segment. The Cytoplasmic portion of the chain corresponds to P510–F553.

Belongs to the major facilitator (TC 2.A.1) superfamily. Organic cation transporter (TC 2.A.1.19) family. Interacts with PDZK1. As to expression, expressed in kidney. Expressed in small intestines. Expressed in liver in non-parenchymal liver tissue such as sinusoidal vessels. Weakly expressed in lung and brain. Expressed in testis and spleen. Expressed in heart.

It is found in the apical cell membrane. The protein resides in the mitochondrion membrane. Its subcellular location is the basal cell membrane. The catalysed reaction is ergothioneine(out) + Na(+)(out) = ergothioneine(in) + Na(+)(in). It carries out the reaction acetylcholine(in) = acetylcholine(out). The enzyme catalyses (R)-carnitine(out) + Na(+)(out) = (R)-carnitine(in) + Na(+)(in). It catalyses the reaction glycine betaine(out) + Na(+)(out) = glycine betaine(in) + Na(+)(in). Its activity is regulated as follows. Allosterically activated by intracellular ATP. In terms of biological role, transporter that mediates the transport of endogenous and microbial zwitterions and organic cations. Functions as a Na(+)-dependent and pH-dependent high affinity microbial symporter of potent food-derived antioxidant ergothioeine. Transports one sodium ion with one ergothioeine molecule. Involved in the absorption of ergothioneine from the luminal/apical side of the small intestine and renal tubular cells, and into non-parenchymal liver cells, thereby contributing to maintain steady-state ergothioneine level in the body. Also mediates the bidirectional transport of acetycholine, although the exact transport mechanism has not been fully identified yet. Most likely exports anti-inflammatory acetylcholine in non-neuronal tissues, thereby contributing to the non-neuronal cholinergic system. Displays a general physiological role linked to better survival by controlling inflammation and oxidative stress, which may be related to ergothioneine and acetycholine transports. May also function as a low-affinity Na(+)-dependent transporter of L-carnitine through the mitochondrial membrane, thereby maintaining intracellular carnitine homeostasis. May contribute to regulate the transport of cationic compounds in testis across the blood-testis-barrier. This chain is Solute carrier family 22 member 4, found in Mus musculus (Mouse).